The following is a 97-amino-acid chain: uncharacterized protein (97 aa).

To M.thermoautotrophicum MTH1236.

This is an uncharacterized protein from Methanocaldococcus jannaschii (strain ATCC 43067 / DSM 2661 / JAL-1 / JCM 10045 / NBRC 100440) (Methanococcus jannaschii).